The sequence spans 413 residues: uncharacterized protein (413 aa).

Residues 14–34 form a helical membrane-spanning segment; that stretch reads LLFFTVVIIPIFYYIYKIVYL. Residues Asn46, Asn55, Asn103, Asn171, Asn179, Asn184, Asn220, Asn252, Asn260, Asn273, Asn362, Asn366, Asn374, Asn378, Asn393, and Asn408 are each glycosylated (N-linked (GlcNAc...) asparagine; by host). A compositionally biased stretch (low complexity) spans 250–263; that stretch reads TKNSTETNSDNNSE. The tract at residues 250-277 is disordered; sequence TKNSTETNSDNNSEIVSETNSETNYSTP. Polar residues predominate over residues 264–277; that stretch reads IVSETNSETNYSTP.

The protein localises to the membrane. This is an uncharacterized protein from Acanthamoeba polyphaga (Amoeba).